A 178-amino-acid chain; its full sequence is MEQFHGTTILSVRRGDKVALGGDGQVTLGNIVMKGGARKVRRIYNNQVLVGFAGGTADAFSLLDRFEAKLEKHQGNLTRAAVELAKDWRTDRLLRRLEAMLIAADATTTLVITGNGDVLDPEGGICAIGSGGSYAQAAARALAENTDLSPREIVEKALGIAGDMCIYTNHNRIIETIE.

Residue T7 is part of the active site. Na(+)-binding residues include G162, C165, and T168.

This sequence belongs to the peptidase T1B family. HslV subfamily. A double ring-shaped homohexamer of HslV is capped on each side by a ring-shaped HslU homohexamer. The assembly of the HslU/HslV complex is dependent on binding of ATP.

It localises to the cytoplasm. The enzyme catalyses ATP-dependent cleavage of peptide bonds with broad specificity.. Its activity is regulated as follows. Allosterically activated by HslU binding. Its function is as follows. Protease subunit of a proteasome-like degradation complex believed to be a general protein degrading machinery. This is ATP-dependent protease subunit HslV from Burkholderia mallei (strain ATCC 23344).